Consider the following 426-residue polypeptide: 3-phosphoshikimate 1-carboxyvinyltransferase (426 aa).

K22, S23, and R27 together coordinate 3-phosphoshikimate. Residue K22 participates in phosphoenolpyruvate binding. Positions 96 and 124 each coordinate phosphoenolpyruvate. Residues S170, S171, Q172, S198, D314, N337, and K341 each contribute to the 3-phosphoshikimate site. Q172 contacts phosphoenolpyruvate. D314 (proton acceptor) is an active-site residue. The phosphoenolpyruvate site is built by R345, R387, and K412.

It belongs to the EPSP synthase family. As to quaternary structure, monomer.

It is found in the cytoplasm. It carries out the reaction 3-phosphoshikimate + phosphoenolpyruvate = 5-O-(1-carboxyvinyl)-3-phosphoshikimate + phosphate. It functions in the pathway metabolic intermediate biosynthesis; chorismate biosynthesis; chorismate from D-erythrose 4-phosphate and phosphoenolpyruvate: step 6/7. Catalyzes the transfer of the enolpyruvyl moiety of phosphoenolpyruvate (PEP) to the 5-hydroxyl of shikimate-3-phosphate (S3P) to produce enolpyruvyl shikimate-3-phosphate and inorganic phosphate. This is 3-phosphoshikimate 1-carboxyvinyltransferase from Vibrio cholerae serotype O1 (strain ATCC 39541 / Classical Ogawa 395 / O395).